A 467-amino-acid chain; its full sequence is ATP synthase subunit beta (467 aa).

Position 154-161 (Gly154–Thr161) interacts with ATP.

This sequence belongs to the ATPase alpha/beta chains family. In terms of assembly, F-type ATPases have 2 components, CF(1) - the catalytic core - and CF(0) - the membrane proton channel. CF(1) has five subunits: alpha(3), beta(3), gamma(1), delta(1), epsilon(1). CF(0) has three main subunits: a(1), b(2) and c(9-12). The alpha and beta chains form an alternating ring which encloses part of the gamma chain. CF(1) is attached to CF(0) by a central stalk formed by the gamma and epsilon chains, while a peripheral stalk is formed by the delta and b chains.

It localises to the cell inner membrane. The enzyme catalyses ATP + H2O + 4 H(+)(in) = ADP + phosphate + 5 H(+)(out). Its function is as follows. Produces ATP from ADP in the presence of a proton gradient across the membrane. The catalytic sites are hosted primarily by the beta subunits. This is ATP synthase subunit beta from Petrotoga mobilis (strain DSM 10674 / SJ95).